Consider the following 348-residue polypeptide: Fe(3+) ions import ATP-binding protein FbpC (348 aa).

An ABC transporter domain is found at Val-7–Met-237. Residue Gly-39–Thr-46 coordinates ATP.

It belongs to the ABC transporter superfamily. Fe(3+) ion importer (TC 3.A.1.10) family. The complex is composed of two ATP-binding proteins (FbpC), two transmembrane proteins (FbpB) and a solute-binding protein (FbpA).

The protein localises to the cell inner membrane. The catalysed reaction is Fe(3+)(out) + ATP + H2O = Fe(3+)(in) + ADP + phosphate + H(+). Part of the ABC transporter complex FbpABC involved in Fe(3+) ions import. Responsible for energy coupling to the transport system. The protein is Fe(3+) ions import ATP-binding protein FbpC of Escherichia coli O157:H7.